The sequence spans 90 residues: RNA-binding protein Hfq (90 aa).

The region spanning 11–71 (DVFLNSVRKT…ISTIMPAAPV (61 aa)) is the Sm domain.

This sequence belongs to the Hfq family. As to quaternary structure, homohexamer.

Functionally, RNA chaperone that binds small regulatory RNA (sRNAs) and mRNAs to facilitate mRNA translational regulation in response to envelope stress, environmental stress and changes in metabolite concentrations. Also binds with high specificity to tRNAs. The sequence is that of RNA-binding protein Hfq from Maricaulis maris (strain MCS10) (Caulobacter maris).